The primary structure comprises 292 residues: Ribosomal protein L11 methyltransferase (292 aa).

The S-adenosyl-L-methionine site is built by T136, G159, D181, and N228.

This sequence belongs to the methyltransferase superfamily. PrmA family.

The protein resides in the cytoplasm. The catalysed reaction is L-lysyl-[protein] + 3 S-adenosyl-L-methionine = N(6),N(6),N(6)-trimethyl-L-lysyl-[protein] + 3 S-adenosyl-L-homocysteine + 3 H(+). In terms of biological role, methylates ribosomal protein L11. This chain is Ribosomal protein L11 methyltransferase, found in Rhizobium etli (strain ATCC 51251 / DSM 11541 / JCM 21823 / NBRC 15573 / CFN 42).